A 1020-amino-acid polypeptide reads, in one-letter code: RNA-binding protein 44 (1020 aa).

2 disordered regions span residues 1–23 (MQAT…GHLQ) and 50–70 (DGEG…NSSV). Positions 58 to 70 (TDERTNVKENSSV) are enriched in basic and acidic residues. A phosphoserine mark is found at Ser-249, Ser-371, Ser-374, Ser-516, Ser-683, and Ser-690. Positions 796–870 (FLIHVGGLCP…KSVNVRLVKI (75 aa)) constitute an RRM domain.

Homodimer. Interacts with TEX14.

The protein localises to the cytoplasm. In terms of biological role, component of intercellular bridges during meiosis. Intercellular bridges are evolutionarily conserved structures that connect differentiating germ cells. Not required for fertility. This Rattus norvegicus (Rat) protein is RNA-binding protein 44 (Rbm44).